Here is a 198-residue protein sequence, read N- to C-terminus: Imidazoleglycerol-phosphate dehydratase (198 aa).

It belongs to the imidazoleglycerol-phosphate dehydratase family.

The protein resides in the cytoplasm. It catalyses the reaction D-erythro-1-(imidazol-4-yl)glycerol 3-phosphate = 3-(imidazol-4-yl)-2-oxopropyl phosphate + H2O. It functions in the pathway amino-acid biosynthesis; L-histidine biosynthesis; L-histidine from 5-phospho-alpha-D-ribose 1-diphosphate: step 6/9. In Gluconacetobacter diazotrophicus (strain ATCC 49037 / DSM 5601 / CCUG 37298 / CIP 103539 / LMG 7603 / PAl5), this protein is Imidazoleglycerol-phosphate dehydratase.